The following is a 667-amino-acid chain: Trifunctional UDP-glucose 4,6-dehydratase/UDP-4-keto-6-deoxy-D-glucose 3,5-epimerase/UDP-4-keto-L-rhamnose-reductase RHM2 (667 aa).

Position 15–21 (15–21 (GAAGFIA)) interacts with NAD(+). Position 134 (Thr134) interacts with substrate. Asp135 functions as the Proton donor in the catalytic mechanism. Residues Glu136 and Tyr161 each act as proton acceptor in the active site. Position 389 to 395 (389 to 395 (GKTGWLG)) interacts with NADP(+).

It in the N-terminal section; belongs to the NAD(P)-dependent epimerase/dehydratase family. dTDP-glucose dehydratase subfamily. In the C-terminal section; belongs to the dTDP-4-dehydrorhamnose reductase family. Requires NAD(+) as cofactor. It depends on NADP(+) as a cofactor. In terms of tissue distribution, expressed in roots, stems, leaves, seedlings, inflorescence tips, and siliques.

It carries out the reaction UDP-alpha-D-glucose = UDP-4-dehydro-6-deoxy-alpha-D-glucose + H2O. The protein operates within carbohydrate biosynthesis. Trifunctional enzyme involved in UDP-beta-L-rhamnose biosynthesis, a precursor of the primary cell wall components rhamnogalacturonan I (RG-I) and rhamnogalacturonan II (RG-II). Catalyzes the dehydration of UDP-glucose to form UDP-4-dehydro-6-deoxy-D-glucose followed by the epimerization of the C3' and C5' positions of UDP-4-dehydro-6-deoxy-D-glucose to form UDP-4-keto-beta-L-rhamnose and the reduction of UDP-4-keto-beta-L-rhamnose to yield UDP-beta-L-rhamnose. Required for the normal seed coat epidermal development. This is Trifunctional UDP-glucose 4,6-dehydratase/UDP-4-keto-6-deoxy-D-glucose 3,5-epimerase/UDP-4-keto-L-rhamnose-reductase RHM2 from Arabidopsis thaliana (Mouse-ear cress).